The chain runs to 459 residues: DNA-binding protein P3A2 (459 aa).

Residues 1–25 (MMISEDISEPSSPDTPFDDSDLLNS) are disordered.

The protein belongs to the NRF1/Ewg family.

It localises to the nucleus. In terms of biological role, transcriptional regulator that interacts with specific sites in the control region of the cyIIIa actin gene. Also binds specifically to similar target sites located in the regulatory region of the SM50 gene. The sequence is that of DNA-binding protein P3A2 from Strongylocentrotus purpuratus (Purple sea urchin).